The following is a 498-amino-acid chain: Isoflavone 2'-hydroxylase (498 aa).

The chain crosses the membrane as a helical span at residues 3-23 (ILSYLCYSLFYLSIFFIIRLL). Cysteine 436 contributes to the heme binding site.

Belongs to the cytochrome P450 family. The cofactor is heme. In terms of tissue distribution, expressed constitutively in roots, but present at very low levels in uninfected stems and leaves.

Its subcellular location is the endoplasmic reticulum membrane. The enzyme catalyses formononetin + reduced [NADPH--hemoprotein reductase] + O2 = 2'-hydroxyformononetin + oxidized [NADPH--hemoprotein reductase] + H2O + H(+). In terms of biological role, involved in the biosynthesis of the pterocarpin phytoalexins. Acts on isoflavones with a 4'-methoxy group on the B-ring, such as formononetin and biochanin A, and on pseudobaptigenin. Has a low activity with daidzein and genistein and no activity with the 7-O-methylated isoflavonoids isoformononetin and prunetin. In Medicago truncatula (Barrel medic), this protein is Isoflavone 2'-hydroxylase.